The chain runs to 357 residues: Non-structural protein NS2 (357 aa).

Disordered regions lie at residues 162 to 199 (QNER…AKEM) and 228 to 268 (LDEK…KTHI). 2 stretches are compositionally biased toward acidic residues: residues 230 to 243 (EKDE…EDEE) and 250 to 260 (DDDEQGEDASD).

It belongs to the orbivirus non-structural protein NS2 family.

Single-stranded RNA-binding protein. The sequence is that of Non-structural protein NS2 (Segment-8) from Antilocapra americana (Pronghorn).